An 824-amino-acid polypeptide reads, in one-letter code: Kinesin-like protein KIFC3 (824 aa).

The disordered stretch occupies residues 27-79; the sequence is EPKPGMARPAPASPAARPFPHTGQGRLRTGRGKDILPSGEEDSTSRTAARPSL. A compositionally biased stretch (low complexity) spans 33-46; sequence ARPAPASPAARPFP. Coiled coils occupy residues 100–360 and 393–430; these read LTVQ…ENLA and LLQE…LQLR. In terms of domain architecture, Kinesin motor spans 443–766; that stretch reads NIRVIARVRP…LRFAERVRSV (324 aa). 526–533 is a binding site for ATP; that stretch reads GQTGAGKT. A disordered region spans residues 771–824; sequence GSRRTELGSWSSQEHLEWEPACQTPQPTARAHSAPGSGTSSRPGSIRRKLQPSA. Phosphoserine is present on residues serine 811 and serine 815. Residues 815-824 are compositionally biased toward basic residues; that stretch reads SIRRKLQPSA.

Belongs to the TRAFAC class myosin-kinesin ATPase superfamily. Kinesin family. As to quaternary structure, interacts with annexin XIIIB. As to expression, predominant expression in the kidney, testis and ovary. Also expressed in brain, heart, liver, lung and uterus.

The protein localises to the cytoplasm. The protein resides in the cytoskeleton. It is found in the cytoplasmic vesicle membrane. Its subcellular location is the cell junction. It localises to the adherens junction. The protein localises to the microtubule organizing center. The protein resides in the centrosome. In terms of biological role, minus-end microtubule-dependent motor protein. Involved in apically targeted transport. Required for zonula adherens maintenance. This Mus musculus (Mouse) protein is Kinesin-like protein KIFC3 (Kifc3).